We begin with the raw amino-acid sequence, 458 residues long: Cysteine--tRNA ligase (458 aa).

Residue Cys27 participates in Zn(2+) binding. The short motif at 29-39 (MTVYDYMHIGH) is the 'HIGH' region element. Residues Cys208, His233, and Glu237 each contribute to the Zn(2+) site. The 'KMSKS' region motif lies at 265–269 (KMSKS). Lys268 lines the ATP pocket.

Belongs to the class-I aminoacyl-tRNA synthetase family. As to quaternary structure, monomer. Requires Zn(2+) as cofactor.

The protein resides in the cytoplasm. It catalyses the reaction tRNA(Cys) + L-cysteine + ATP = L-cysteinyl-tRNA(Cys) + AMP + diphosphate. In Coxiella burnetii (strain Dugway 5J108-111), this protein is Cysteine--tRNA ligase.